The sequence spans 463 residues: Mitochondrial dynamics protein MIEF1 (463 aa).

Residues 1-23 are Mitochondrial intermembrane-facing; that stretch reads MAGAGERKGKKDDNGIGTAIDFV. The chain crosses the membrane as a helical span at residues 24-46; sequence LSNARLVLGVGGAAMLGIATLAV. Residues 47-463 are Cytoplasmic-facing; the sequence is KRMYDRAISA…LSEPEVLLQT (417 aa). Positions 49–195 are dimerization; that stretch reads MYDRAISAPT…LSGSLYDDLQ (147 aa). 4 positions are modified to phosphoserine: Ser-55, Ser-59, Ser-79, and Ser-94. The tract at residues 57-77 is disordered; it reads PTSPTRLSHSGKRSWEEPNWM. A disordered region spans residues 96–123; the sequence is QTLPTDSSTFDTDTFCPPRPKPVARKGQ. Low complexity predominate over residues 100-110; sequence TDSSTFDTDTF. The important for interaction with DNM1L stretch occupies residues 160–169; that stretch reads AAVDICAELR. Ser-187, Ser-189, and His-201 together coordinate ADP. Residues 234 to 242 form an important for interaction with DNM1L region; that stretch reads RRENPEYFP. The ADP site is built by Ser-340, Arg-342, and Lys-368.

This sequence belongs to the SMCR7 family. In terms of assembly, homodimer. Interacts with DNM1L. As to expression, expression is relatively high in heart, skeletal muscle, pancreas and kidney.

The protein resides in the mitochondrion outer membrane. Functionally, mitochondrial outer membrane protein which regulates mitochondrial fission/fusion dynamics. Promotes the recruitment and association of the fission mediator dynamin-related protein 1 (DNM1L) to the mitochondrial surface independently of the mitochondrial fission FIS1 and MFF proteins. Regulates DNM1L GTPase activity and DNM1L oligomerization. Binds ADP and can also bind GDP, although with lower affinity. Does not bind CDP, UDP, ATP, AMP or GTP. Inhibits DNM1L GTPase activity in the absence of bound ADP. Requires ADP to stimulate DNM1L GTPase activity and the assembly of DNM1L into long, oligomeric tubules with a spiral pattern, as opposed to the ring-like DNM1L oligomers observed in the absence of bound ADP. Does not require ADP for its function in recruiting DNM1L. This Homo sapiens (Human) protein is Mitochondrial dynamics protein MIEF1.